A 288-amino-acid chain; its full sequence is Protease HtpX (288 aa).

2 consecutive transmembrane segments (helical) span residues 5–25 (IALF…VMSL) and 34–54 (SGLL…SLLL). His140 is a Zn(2+) binding site. Residue Glu141 is part of the active site. Residue His144 coordinates Zn(2+). 2 helical membrane-spanning segments follow: residues 155–175 (LLQG…GGII) and 190–210 (FAYF…ATMI). A Zn(2+)-binding site is contributed by Glu219.

The protein belongs to the peptidase M48B family. Zn(2+) is required as a cofactor.

Its subcellular location is the cell inner membrane. This chain is Protease HtpX, found in Stenotrophomonas maltophilia (strain R551-3).